Reading from the N-terminus, the 125-residue chain is MAVCIIDHDNIRGVIYFEPVHGKDKVLGSVIGLKSGTYSLIIHRYGDISQGCDSIGSPEIFIGNIFVNRYGVAYVYLDTDVNISTIIGKALSISKNDQRLACGVIGISYINEKIIHFLTINENGV.

Cysteines 52 and 102 form a disulfide.

Belongs to the Cu-Zn superoxide dismutase family.

It is found in the virion. The protein localises to the host cytoplasm. Its function is as follows. Superoxide dismutase-like protein with no enzymatic activity. This Vaccinia virus (strain Western Reserve) (VACV) protein is Cu-Zn superoxide dismutase-like protein OPG175 (OPG175).